Consider the following 720-residue polypeptide: Polyribonucleotide nucleotidyltransferase (720 aa).

Residues aspartate 487 and aspartate 493 each coordinate Mg(2+). The KH domain occupies proline 554 to isoleucine 613. Residues glycine 623–lysine 691 form the S1 motif domain. The disordered stretch occupies residues glutamate 699–glutamate 720. The segment covering leucine 701–glutamate 720 has biased composition (basic and acidic residues).

The protein belongs to the polyribonucleotide nucleotidyltransferase family. Requires Mg(2+) as cofactor.

It localises to the cytoplasm. The enzyme catalyses RNA(n+1) + phosphate = RNA(n) + a ribonucleoside 5'-diphosphate. In terms of biological role, involved in mRNA degradation. Catalyzes the phosphorolysis of single-stranded polyribonucleotides processively in the 3'- to 5'-direction. The polypeptide is Polyribonucleotide nucleotidyltransferase (Bradyrhizobium diazoefficiens (strain JCM 10833 / BCRC 13528 / IAM 13628 / NBRC 14792 / USDA 110)).